A 395-amino-acid polypeptide reads, in one-letter code: Ribosomal RNA large subunit methyltransferase I (395 aa).

The PUA domain occupies 2-79; that stretch reads SSRVTLHPGR…QNESVDNGFF (78 aa).

The protein belongs to the methyltransferase superfamily. RlmI family.

The protein resides in the cytoplasm. It carries out the reaction cytidine(1962) in 23S rRNA + S-adenosyl-L-methionine = 5-methylcytidine(1962) in 23S rRNA + S-adenosyl-L-homocysteine + H(+). Functionally, specifically methylates the cytosine at position 1962 (m5C1962) of 23S rRNA. The protein is Ribosomal RNA large subunit methyltransferase I of Pseudoalteromonas atlantica (strain T6c / ATCC BAA-1087).